The primary structure comprises 299 residues: Oxygen-dependent coproporphyrinogen-III oxidase (299 aa).

Ser92 is a substrate binding site. 2 residues coordinate a divalent metal cation: His96 and His106. Catalysis depends on His106, which acts as the Proton donor. Position 108–110 (108–110) interacts with substrate; the sequence is NVR. Residues His145 and His175 each coordinate a divalent metal cation. The interval 240–275 is important for dimerization; the sequence is YVEFNLVWDRGTLFGLQTGGRTESILMSMPPLVRWE. 258–260 is a substrate binding site; the sequence is GGR.

It belongs to the aerobic coproporphyrinogen-III oxidase family. As to quaternary structure, homodimer. A divalent metal cation is required as a cofactor.

Its subcellular location is the cytoplasm. It catalyses the reaction coproporphyrinogen III + O2 + 2 H(+) = protoporphyrinogen IX + 2 CO2 + 2 H2O. It functions in the pathway porphyrin-containing compound metabolism; protoporphyrin-IX biosynthesis; protoporphyrinogen-IX from coproporphyrinogen-III (O2 route): step 1/1. In terms of biological role, involved in the heme biosynthesis. Catalyzes the aerobic oxidative decarboxylation of propionate groups of rings A and B of coproporphyrinogen-III to yield the vinyl groups in protoporphyrinogen-IX. This Salmonella dublin (strain CT_02021853) protein is Oxygen-dependent coproporphyrinogen-III oxidase.